A 493-amino-acid chain; its full sequence is Probable cytosol aminopeptidase (493 aa).

2 residues coordinate Mn(2+): Lys-260 and Asp-265. Residue Lys-272 is part of the active site. Residues Asp-284, Asp-343, and Glu-345 each contribute to the Mn(2+) site. Residue Arg-347 is part of the active site.

Belongs to the peptidase M17 family. Mn(2+) is required as a cofactor.

Its subcellular location is the cytoplasm. The catalysed reaction is Release of an N-terminal amino acid, Xaa-|-Yaa-, in which Xaa is preferably Leu, but may be other amino acids including Pro although not Arg or Lys, and Yaa may be Pro. Amino acid amides and methyl esters are also readily hydrolyzed, but rates on arylamides are exceedingly low.. The enzyme catalyses Release of an N-terminal amino acid, preferentially leucine, but not glutamic or aspartic acids.. Its function is as follows. Presumably involved in the processing and regular turnover of intracellular proteins. Catalyzes the removal of unsubstituted N-terminal amino acids from various peptides. This is Probable cytosol aminopeptidase from Nostoc punctiforme (strain ATCC 29133 / PCC 73102).